Reading from the N-terminus, the 346-residue chain is Holliday junction branch migration complex subunit RuvB (346 aa).

The large ATPase domain (RuvB-L) stretch occupies residues 4-184 (TDRLIAPTAK…FGIVQRLEFY (181 aa)). Residues arginine 24, glycine 65, lysine 68, threonine 69, threonine 70, 131–133 (EDF), arginine 174, tyrosine 184, and arginine 221 each bind ATP. Threonine 69 is a binding site for Mg(2+). Residues 185–255 (NVKDLTHIVA…LADKALNMLN (71 aa)) form a small ATPAse domain (RuvB-S) region. Positions 258–346 (ERGFDHMDRR…QESQGGEGIA (89 aa)) are head domain (RuvB-H). DNA-binding residues include arginine 294, arginine 313, and arginine 318.

Belongs to the RuvB family. As to quaternary structure, homohexamer. Forms an RuvA(8)-RuvB(12)-Holliday junction (HJ) complex. HJ DNA is sandwiched between 2 RuvA tetramers; dsDNA enters through RuvA and exits via RuvB. An RuvB hexamer assembles on each DNA strand where it exits the tetramer. Each RuvB hexamer is contacted by two RuvA subunits (via domain III) on 2 adjacent RuvB subunits; this complex drives branch migration. In the full resolvosome a probable DNA-RuvA(4)-RuvB(12)-RuvC(2) complex forms which resolves the HJ.

The protein localises to the cytoplasm. The enzyme catalyses ATP + H2O = ADP + phosphate + H(+). Its function is as follows. The RuvA-RuvB-RuvC complex processes Holliday junction (HJ) DNA during genetic recombination and DNA repair, while the RuvA-RuvB complex plays an important role in the rescue of blocked DNA replication forks via replication fork reversal (RFR). RuvA specifically binds to HJ cruciform DNA, conferring on it an open structure. The RuvB hexamer acts as an ATP-dependent pump, pulling dsDNA into and through the RuvAB complex. RuvB forms 2 homohexamers on either side of HJ DNA bound by 1 or 2 RuvA tetramers; 4 subunits per hexamer contact DNA at a time. Coordinated motions by a converter formed by DNA-disengaged RuvB subunits stimulates ATP hydrolysis and nucleotide exchange. Immobilization of the converter enables RuvB to convert the ATP-contained energy into a lever motion, pulling 2 nucleotides of DNA out of the RuvA tetramer per ATP hydrolyzed, thus driving DNA branch migration. The RuvB motors rotate together with the DNA substrate, which together with the progressing nucleotide cycle form the mechanistic basis for DNA recombination by continuous HJ branch migration. Branch migration allows RuvC to scan DNA until it finds its consensus sequence, where it cleaves and resolves cruciform DNA. In Cellvibrio japonicus (strain Ueda107) (Pseudomonas fluorescens subsp. cellulosa), this protein is Holliday junction branch migration complex subunit RuvB.